The sequence spans 469 residues: 3-isopropylmalate dehydratase large subunit (469 aa).

Residues Cys348, Cys409, and Cys412 each contribute to the [4Fe-4S] cluster site.

Belongs to the aconitase/IPM isomerase family. LeuC type 1 subfamily. As to quaternary structure, heterodimer of LeuC and LeuD. It depends on [4Fe-4S] cluster as a cofactor.

The catalysed reaction is (2R,3S)-3-isopropylmalate = (2S)-2-isopropylmalate. It participates in amino-acid biosynthesis; L-leucine biosynthesis; L-leucine from 3-methyl-2-oxobutanoate: step 2/4. Functionally, catalyzes the isomerization between 2-isopropylmalate and 3-isopropylmalate, via the formation of 2-isopropylmaleate. The sequence is that of 3-isopropylmalate dehydratase large subunit from Nitrosococcus oceani (strain ATCC 19707 / BCRC 17464 / JCM 30415 / NCIMB 11848 / C-107).